The chain runs to 89 residues: Small ribosomal subunit protein uS15 (89 aa).

The protein belongs to the universal ribosomal protein uS15 family. In terms of assembly, part of the 30S ribosomal subunit. Forms a bridge to the 50S subunit in the 70S ribosome, contacting the 23S rRNA.

One of the primary rRNA binding proteins, it binds directly to 16S rRNA where it helps nucleate assembly of the platform of the 30S subunit by binding and bridging several RNA helices of the 16S rRNA. In terms of biological role, forms an intersubunit bridge (bridge B4) with the 23S rRNA of the 50S subunit in the ribosome. This chain is Small ribosomal subunit protein uS15, found in Cereibacter sphaeroides (strain ATCC 17025 / ATH 2.4.3) (Rhodobacter sphaeroides).